A 143-amino-acid chain; its full sequence is Peptide methionine sulfoxide reductase MsrB (143 aa).

The 124-residue stretch at 16–139 folds into the MsrB domain; it reads DAELRRRLTP…NSAALNFESR (124 aa). Cys-55, Cys-58, Cys-104, and Cys-107 together coordinate Zn(2+). The active-site Nucleophile is Cys-128.

The protein belongs to the MsrB Met sulfoxide reductase family. The cofactor is Zn(2+).

The catalysed reaction is L-methionyl-[protein] + [thioredoxin]-disulfide + H2O = L-methionyl-(R)-S-oxide-[protein] + [thioredoxin]-dithiol. The sequence is that of Peptide methionine sulfoxide reductase MsrB from Burkholderia multivorans (strain ATCC 17616 / 249).